The chain runs to 288 residues: Very-long-chain (3R)-3-hydroxyacyl-CoA dehydratase 1 (288 aa).

Residues Met1–Arg59 form a disordered region. At Met1–Trp75 the chain is on the cytoplasmic side. A helical membrane pass occupies residues Leu76–Val95. Residues Arg96–Thr114 are Lumenal-facing. Residues Leu115–Ile131 form a helical membrane-spanning segment. Topologically, residues Gly132–Ala141 are cytoplasmic. Residues Gly142 to Ile159 traverse the membrane as a helical segment. The Lumenal segment spans residues Lys160–Glu165. The helical transmembrane segment at Glu166–Ile180 threads the bilayer. The Cytoplasmic segment spans residues Thr181 to Tyr203. Residues Asn204–Ile221 traverse the membrane as a helical segment. Active-site residues include Tyr210 and Glu217. At Tyr222–Phe251 the chain is on the lumenal side. The N-linked (GlcNAc...) asparagine glycan is linked to Asn243. The chain crosses the membrane as a helical span at residues Leu252–His269. At Met270 to Asp288 the chain is on the cytoplasmic side.

It belongs to the very long-chain fatty acids dehydratase HACD family. As to quaternary structure, may interact with enzymes of the ELO family (including ELOVL1); with those enzymes that mediate condensation, the first of the four steps of the reaction cycle responsible for fatty acids elongation, may be part of a larger fatty acids elongase complex. Interacts with TECR. Post-translationally, N-glycosylated. Expressed in heart.

The protein resides in the endoplasmic reticulum membrane. The catalysed reaction is a very-long-chain (3R)-3-hydroxyacyl-CoA = a very-long-chain (2E)-enoyl-CoA + H2O. It carries out the reaction (3R)-hydroxyhexadecanoyl-CoA = (2E)-hexadecenoyl-CoA + H2O. It catalyses the reaction (3R)-hydroxyoctadecanoyl-CoA = (2E)-octadecenoyl-CoA + H2O. The enzyme catalyses (3R)-hydroxyeicosanoyl-CoA = (2E)-eicosenoyl-CoA + H2O. The catalysed reaction is (3R)-hydroxydocosanoyl-CoA = (2E)-docosenoyl-CoA + H2O. It carries out the reaction (3R)-hydroxytetracosanoyl-CoA = (2E)-tetracosenoyl-CoA + H2O. It catalyses the reaction (3R)-hydroxyhexacosanoyl-CoA = (2E)-hexacosenoyl-CoA + H2O. Its pathway is lipid metabolism; fatty acid biosynthesis. Functionally, catalyzes the third of the four reactions of the long-chain fatty acids elongation cycle. This endoplasmic reticulum-bound enzymatic process, allows the addition of two carbons to the chain of long- and very long-chain fatty acids/VLCFAs per cycle. This enzyme catalyzes the dehydration of the 3-hydroxyacyl-CoA intermediate into trans-2,3-enoyl-CoA, within each cycle of fatty acid elongation. Thereby, it participates in the production of VLCFAs of different chain lengths that are involved in multiple biological processes as precursors of membrane lipids and lipid mediators. The polypeptide is Very-long-chain (3R)-3-hydroxyacyl-CoA dehydratase 1 (HACD1) (Ovis aries (Sheep)).